The primary structure comprises 95 residues: Small ribosomal subunit protein bS6 (95 aa).

The protein belongs to the bacterial ribosomal protein bS6 family.

In terms of biological role, binds together with bS18 to 16S ribosomal RNA. The protein is Small ribosomal subunit protein bS6 of Bacillus pumilus (strain SAFR-032).